Here is a 468-residue protein sequence, read N- to C-terminus: Midnolin (468 aa).

Residues 31–105 enclose the Ubiquitin-like domain; it reads MSLAIHSTTG…LTLVPTVEAG (75 aa). Disordered regions lie at residues 182-264 and 404-447; these read PSIA…RSRK and LRRK…LGLD. Residues 185–201 show a composition bias toward low complexity; the sequence is ASPVSSPCRPVSSAARV. Over residues 202-213 the composition is skewed to pro residues; it reads PPVPTSPSPASP. Low complexity-rich tracts occupy residues 237 to 260 and 419 to 431; these read SPTA…SPAP and SPSR…DSSS.

In terms of assembly, interacts with GCK; the interaction occurs preferentially at low glucose levels. Interacts with the proteasome.

The protein resides in the nucleus. The protein localises to the nucleolus. It is found in the cytoplasm. It localises to the cytosol. Facilitates the ubiquitin-independent proteasomal degradation of stimulus-induced transcription factors such as FOSB, EGR1, NR4A1, and IRF4 to the proteasome for degradation. Promotes also the degradation of other substrates such as CBX4. Plays a role in inhibiting the activity of glucokinase GCK and both glucose-induced and basal insulin secretion. The sequence is that of Midnolin (MIDN) from Homo sapiens (Human).